Reading from the N-terminus, the 307-residue chain is 1D-myo-inositol 2-acetamido-2-deoxy-alpha-D-glucopyranoside deacetylase 1 (307 aa).

3 residues coordinate Zn(2+): histidine 21, aspartate 24, and histidine 157.

It belongs to the MshB deacetylase family. It depends on Zn(2+) as a cofactor.

It carries out the reaction 1D-myo-inositol 2-acetamido-2-deoxy-alpha-D-glucopyranoside + H2O = 1D-myo-inositol 2-amino-2-deoxy-alpha-D-glucopyranoside + acetate. In terms of biological role, catalyzes the deacetylation of 1D-myo-inositol 2-acetamido-2-deoxy-alpha-D-glucopyranoside (GlcNAc-Ins) in the mycothiol biosynthesis pathway. The chain is 1D-myo-inositol 2-acetamido-2-deoxy-alpha-D-glucopyranoside deacetylase 1 from Frankia casuarinae (strain DSM 45818 / CECT 9043 / HFP020203 / CcI3).